Here is a 194-residue protein sequence, read N- to C-terminus: Imidazoleglycerol-phosphate dehydratase (194 aa).

The protein belongs to the imidazoleglycerol-phosphate dehydratase family.

It is found in the cytoplasm. The enzyme catalyses D-erythro-1-(imidazol-4-yl)glycerol 3-phosphate = 3-(imidazol-4-yl)-2-oxopropyl phosphate + H2O. Its pathway is amino-acid biosynthesis; L-histidine biosynthesis; L-histidine from 5-phospho-alpha-D-ribose 1-diphosphate: step 6/9. The protein is Imidazoleglycerol-phosphate dehydratase of Thermoanaerobacter pseudethanolicus (strain ATCC 33223 / 39E) (Clostridium thermohydrosulfuricum).